The primary structure comprises 289 residues: Glycine--tRNA ligase alpha subunit (289 aa).

This sequence belongs to the class-II aminoacyl-tRNA synthetase family. As to quaternary structure, tetramer of two alpha and two beta subunits.

The protein localises to the cytoplasm. The catalysed reaction is tRNA(Gly) + glycine + ATP = glycyl-tRNA(Gly) + AMP + diphosphate. This is Glycine--tRNA ligase alpha subunit from Prochlorococcus marinus (strain MIT 9515).